Consider the following 176-residue polypeptide: Thiol:disulfide interchange protein HelX (176 aa).

The first 19 residues, 1–19 (MAKPLMFLPLLVMAGFVGA), serve as a signal peptide directing secretion. A Thioredoxin domain is found at 35–172 (ALAGKEAPAV…ITKKIDPLLA (138 aa)). Cysteines 75 and 78 form a disulfide.

This sequence belongs to the thioredoxin family. DsbE subfamily.

It is found in the periplasm. In terms of biological role, required for disulfide bond formation in some periplasmic proteins. Also acts as a disulfide oxidoreductase in cytochromes c biogenesis. The cysteines of apocytochromes c must be in the reduced state for covalent linkage between the two moieties to occur. The polypeptide is Thiol:disulfide interchange protein HelX (helX) (Rhodobacter capsulatus (strain ATCC BAA-309 / NBRC 16581 / SB1003)).